A 198-amino-acid chain; its full sequence is Segregation and condensation protein B (198 aa).

The segment at 168–198 is disordered; that stretch reads KLADPATDEPDQNEMDLFFDRFNQSKEQEEE.

It belongs to the ScpB family. As to quaternary structure, homodimer. Homodimerization may be required to stabilize the binding of ScpA to the Smc head domains. Component of a cohesin-like complex composed of ScpA, ScpB and the Smc homodimer, in which ScpA and ScpB bind to the head domain of Smc. The presence of the three proteins is required for the association of the complex with DNA.

It is found in the cytoplasm. Functionally, participates in chromosomal partition during cell division. May act via the formation of a condensin-like complex containing Smc and ScpA that pull DNA away from mid-cell into both cell halves. The polypeptide is Segregation and condensation protein B (Listeria monocytogenes serovar 1/2a (strain ATCC BAA-679 / EGD-e)).